The sequence spans 102 residues: Putative toxin YafQ (102 aa).

The protein belongs to the RelE toxin family. YafQ subfamily.

Its function is as follows. Toxic component of a type II toxin-antitoxin (TA) system. Its cognate antitoxin is RelB. This is Putative toxin YafQ from Haemophilus influenzae (strain ATCC 51907 / DSM 11121 / KW20 / Rd).